Consider the following 124-residue polypeptide: ATP synthase subunit H, mitochondrial (124 aa).

The N-terminal 32 residues, 1–32 (MFPIASRRILLNASVLPLRLCNRNFTTTRISY), are a transit peptide targeting the mitochondrion. The interval 89-124 (NVETAHVAKESEEGESEPIEEDWLVLDDAEETKESH) is disordered. Residues 100–124 (EEGESEPIEEDWLVLDDAEETKESH) show a composition bias toward acidic residues.

It belongs to the ATPase h subunit family. As to quaternary structure, F-type ATPases have 2 components, CF(1) - the catalytic core - and CF(0) - the membrane proton channel. In yeast, the dimeric form of ATP synthase consists of 17 polypeptides: alpha, beta, gamma, delta, epsilon, 4 (B), 5 (OSCP), 6 (A), 8, 9 (C), d, E (Tim11), f, g, h, i/j and k.

Its subcellular location is the mitochondrion. It is found in the mitochondrion inner membrane. Mitochondrial membrane ATP synthase (F(1)F(0) ATP synthase or Complex V) produces ATP from ADP in the presence of a proton gradient across the membrane which is generated by electron transport complexes of the respiratory chain. F-type ATPases consist of two structural domains, F(1) - containing the extramembraneous catalytic core and F(0) - containing the membrane proton channel, linked together by a central stalk and a peripheral stalk. During catalysis, ATP synthesis in the catalytic domain of F(1) is coupled via a rotary mechanism of the central stalk subunits to proton translocation. Part of the complex F(0) domain. Minor subunit located with subunit a in the membrane. The polypeptide is ATP synthase subunit H, mitochondrial (ATP14) (Saccharomyces cerevisiae (strain ATCC 204508 / S288c) (Baker's yeast)).